The sequence spans 208 residues: Large ribosomal subunit protein uL4 (208 aa).

The segment at 49-78 is disordered; that stretch reads HKAKTRAEVRGGGKKPFRQKGTGNARQGST. A compositionally biased stretch (polar residues) spans 69–78; it reads GTGNARQGST.

The protein belongs to the universal ribosomal protein uL4 family. As to quaternary structure, part of the 50S ribosomal subunit.

One of the primary rRNA binding proteins, this protein initially binds near the 5'-end of the 23S rRNA. It is important during the early stages of 50S assembly. It makes multiple contacts with different domains of the 23S rRNA in the assembled 50S subunit and ribosome. Functionally, forms part of the polypeptide exit tunnel. This Chlorobaculum tepidum (strain ATCC 49652 / DSM 12025 / NBRC 103806 / TLS) (Chlorobium tepidum) protein is Large ribosomal subunit protein uL4.